Here is a 309-residue protein sequence, read N- to C-terminus: MERLKRMSVFAKVVEFGSFTAAARQLQMSVSSISQTVSKLEDELQVKLLNRSTRSIGLTEAGRIYYQGCRRMLHEVQDVHEQLYAFNNTPIGTLRIGCSSTMAQNVLAGLTAKMLKEYPGLSVNLVTGIPAPDLIADGLDVVIRVGALQDSSLFSRRLGAMPMVVCAAKSYLTQYGIPEKPADLSSHSWLEYSVRPDNEFELIAPEGISTRLIPQGRFVTNDPMTLVRWLTAGAGIAYVPLMWVINEINRGELEILLPRYQSDPRPVYALYTEKDKLPLKVQVVINSLTDYFVEVGKLFQEMHGRGKEK.

Positions 1-59 constitute an HTH lysR-type domain; it reads MERLKRMSVFAKVVEFGSFTAAARQLQMSVSSISQTVSKLEDELQVKLLNRSTRSIGLT. A DNA-binding region (H-T-H motif) is located at residues 19–38; it reads FTAAARQLQMSVSSISQTVS.

The protein belongs to the LysR transcriptional regulatory family.

Its activity is regulated as follows. Activity is regulated by p-hydroxybenzoic acid. Its function is as follows. Transcriptional regulator that activates expression of the aaeXAB operon, which is involved in the efflux of aromatic carboxylic acids such as p-hydroxybenzoic acid (pHBA). In the presence of the effector pHBA, acts by binding to a single target within the aaeXAB-aaeR intergenic region. In the absence of pHBA, binds more than 50 sites along the E.coli K12 genome, including genes related to biofilm formation and several genes involved in stress response, suggesting that it might play a role in quorum sensing in the absence of pHBA. The sequence is that of HTH-type transcriptional activator AaeR from Escherichia coli (strain K12).